A 1442-amino-acid chain; its full sequence is Protein patched homolog 1 (1442 aa).

The segment at 1 to 45 (MASAADALEPESGSSTAGGGSHPVRAARSARGRRRRSGGTRRAAA) is disordered. Topologically, residues 1-101 (MASAADALEP…GCYIQKNCGK (101 aa)) are cytoplasmic. The span at 28–39 (RSARGRRRRSGG) shows a compositional bias: basic residues. A helical membrane pass occupies residues 102–122 (FLVVGLLYSAFAVGLRAANLE). At 123–436 (TNVEELWVEV…LDDILKSFSD (314 aa)) the chain is on the extracellular side. N-linked (GlcNAc...) asparagine glycans are attached at residues Asn141, Asn312, Asn349, and Asn414. A helical membrane pass occupies residues 437–457 (VSVIRVASGYLLMLAYACLTM). An SSD domain is found at 438-598 (SVIRVASGYL…LLIFPAILSM (161 aa)). Over 458–472 (LRWDCAKSQGAVGLA) the chain is Cytoplasmic. A helical transmembrane segment spans residues 473-493 (GVLLVALSVAAGLGLCSLIGI). Residues 494 to 501 (SFNAATTQ) lie on the Extracellular side of the membrane. A helical transmembrane segment spans residues 502–522 (VLPFLALGVGVDDVFLLAHAF). The Cytoplasmic portion of the chain corresponds to 523-547 (SETGQNKRIPFEDRTGECLKRTGAS). A helical transmembrane segment spans residues 548–568 (VALTSISNVTAFFMAALIPIP). The Extracellular portion of the chain corresponds to 569-577 (ALRAFSLQA). The chain crosses the membrane as a helical span at residues 578–598 (AVVVVFNFAMVLLIFPAILSM). Topologically, residues 599-747 (DLYRREDRRL…HYAPFLLKPK (149 aa)) are cytoplasmic. The chain crosses the membrane as a helical span at residues 748–768 (AKVVVIFLFLGLLGLSLYGTT). Residues 769-1026 (RVRDGLDLTD…WEQYIGLRHW (258 aa)) are Extracellular-facing. N-linked (GlcNAc...) asparagine glycans are attached at residues Asn827, Asn874, and Asn999. A helical membrane pass occupies residues 1027-1047 (LLLSISVVLACTFLVCALFLL). Over 1048–1053 (NPWTAG) the chain is Cytoplasmic. A helical transmembrane segment spans residues 1054-1074 (IIVVVLALMTVELFGMMGLIG). Topologically, residues 1075–1082 (IKLSAVPV) are extracellular. The chain crosses the membrane as a helical span at residues 1083–1101 (VILIASVGIGVEFTVHIAL). Residues 1102–1120 (AFLTAIGDKNRRAVLALEH) lie on the Cytoplasmic side of the membrane. Residues 1121-1141 (MFAPVLDGAVSTLLGVLMLAG) traverse the membrane as a helical segment. The Extracellular segment spans residues 1142–1153 (SEFDFIVRYFFA). A helical membrane pass occupies residues 1154 to 1174 (VLAILTILGVLNGLVLLPVLL). The Cytoplasmic segment spans residues 1175-1442 (SFFGPYPEVS…EERTAGKISE (268 aa)). Disordered stretches follow at residues 1188–1231 (GRNR…TTVS) and 1266–1338 (STVV…LNHK). Residues 1217–1226 (SDSSDSEYSS) show a composition bias toward low complexity. The segment covering 1276–1293 (QSSPRLQSNPEAGTQQVW) has biased composition (polar residues).

Belongs to the patched family. In terms of processing, glycosylation is necessary for SHH binding. Expression is seen in the embryonic neural tube, sclerotome, visceral mesoderm, and limb bud.

Its subcellular location is the membrane. Acts as a receptor for sonic hedgehog (SHH), indian hedgehog (IHH) and desert hedgehog (DHH). Associates with the smoothened protein (SMO) to transduce the hedgehog's proteins signal. The polypeptide is Protein patched homolog 1 (PTCH1) (Gallus gallus (Chicken)).